Reading from the N-terminus, the 123-residue chain is Transmembrane protein 049L (123 aa).

Transmembrane regions (helical) follow at residues 67 to 87 (VFGA…LWLV) and 104 to 121 (LSLQ…GVYN).

It is found in the membrane. This chain is Transmembrane protein 049L, found in Acheta domesticus (House cricket).